A 335-amino-acid chain; its full sequence is S-adenosylmethionine:tRNA ribosyltransferase-isomerase (335 aa).

The protein belongs to the QueA family. As to quaternary structure, monomer.

It is found in the cytoplasm. It carries out the reaction 7-aminomethyl-7-carbaguanosine(34) in tRNA + S-adenosyl-L-methionine = epoxyqueuosine(34) in tRNA + adenine + L-methionine + 2 H(+). Its pathway is tRNA modification; tRNA-queuosine biosynthesis. Its function is as follows. Transfers and isomerizes the ribose moiety from AdoMet to the 7-aminomethyl group of 7-deazaguanine (preQ1-tRNA) to give epoxyqueuosine (oQ-tRNA). The protein is S-adenosylmethionine:tRNA ribosyltransferase-isomerase of Thermosipho africanus (strain TCF52B).